We begin with the raw amino-acid sequence, 67 residues long: Small ribosomal subunit protein bS21 (67 aa).

Belongs to the bacterial ribosomal protein bS21 family.

This chain is Small ribosomal subunit protein bS21, found in Nitratidesulfovibrio vulgaris (strain DP4) (Desulfovibrio vulgaris).